The chain runs to 1658 residues: Collagen alpha-1(XXVII) chain B (1658 aa).

The first 38 residues, 1 to 38 (MEPDNTPSSRLRAAGVGGRAVFFCMVLYCTCCLRLAQA), serve as a signal peptide directing secretion. The region spanning 66–229 (GVILTTRARI…NYCKYIKKQC (164 aa)) is the Laminin G-like domain. Residues 308–323 (SIRNRTSQISPKPTQQ) show a composition bias toward polar residues. 6 disordered regions span residues 308–332 (SIRN…KKER), 345–364 (VTDS…TTTT), 427–550 (GLKG…GNMG), 571–614 (GERG…APGP), 637–1332 (GPKG…DAGE), and 1377–1415 (IIGP…GPPG). Residues 424-1417 (ELTGLKGEPG…RGPPGPPGLP (994 aa)) are triple-helical region. Collagen-like domains follow at residues 425 to 478 (LTGL…GNPG), 493 to 552 (GLVG…MGPK), 556 to 615 (GFIG…PGPV), 622 to 681 (GDMG…PGLP), 685 to 744 (GKPG…PGLE), 748 to 807 (GPVG…MGLA), and 811 to 870 (GDRG…RGPD). The segment covering 434 to 444 (LPGPPGPPGQP) has biased composition (pro residues). Residues 491-506 (DPGLVGLPGQPGQPGR) are compositionally biased toward low complexity. Composition is skewed to low complexity over residues 657–666 (LGLPGEPGEP) and 678–692 (PGLP…PQGK). Gly residues predominate over residues 733–742 (GIPGPGGLPG). Composition is skewed to low complexity over residues 837–852 (RGLS…HGSR) and 875–890 (EKGM…PPGK). Collagen-like domains follow at residues 892–951 (GLSG…IGLP), 952–1011 (GKAG…VGLE), 1024–1083 (GTEG…IGPK), 1084–1137 (GSRG…DGKV), 1139–1198 (GPPG…KGSK), 1199–1258 (GNKG…PGDL), 1268–1327 (GKPG…KGQP), and 1361–1420 (GPQG…PAVA). The segment covering 1040 to 1058 (PEGKPGKIGERGKPGEKGS) has biased composition (basic and acidic residues). The segment covering 1112-1124 (HQGPQGSLGSPGP) has biased composition (low complexity). The span at 1125-1137 (KGEKGEQGDDGKV) shows a compositional bias: basic and acidic residues. Residues 1215–1230 (NRGSPGPVGVPGPRGV) show a composition bias toward low complexity. Over residues 1307–1316 (GLNGGMGFPG) the composition is skewed to gly residues. The span at 1402-1415 (RGPPGPRGPPGPPG) shows a compositional bias: pro residues. Residues 1421–1658 (FSHENEALGA…HLEVGPVCFL (238 aa)) constitute a propeptide, C-terminal propeptide. In terms of domain architecture, Fibrillar collagen NC1 spans 1458–1658 (SEIFKTLHYL…HLEVGPVCFL (201 aa)). Cystine bridges form between cysteine 1488/cysteine 1520, cysteine 1529/cysteine 1656, and cysteine 1565/cysteine 1609. Ca(2+) contacts are provided by aspartate 1506, asparagine 1508, cysteine 1511, and aspartate 1514. N-linked (GlcNAc...) asparagine glycosylation is present at asparagine 1567.

Belongs to the fibrillar collagen family. Weakly expressed in the notochord from the 6 somite stage. Expressed throughout the notochord at 13 somites, then becomes restricted to the distal tip of the notochord by 24 hpf. Also expressed in head cartilages by 48 hpf.

It is found in the secreted. The protein resides in the extracellular space. Its subcellular location is the extracellular matrix. May play a role during the calcification of cartilage and the transition of cartilage to bone. Together with col27a1a, plays a role in development of the notochord and axial skeleton. This chain is Collagen alpha-1(XXVII) chain B (col27a1b), found in Danio rerio (Zebrafish).